The primary structure comprises 104 residues: L-rhamnose mutarotase (104 aa).

Tyr18 contacts substrate. Catalysis depends on His22, which acts as the Proton donor. Substrate is bound by residues Tyr41 and 76–77 (WW).

It belongs to the rhamnose mutarotase family. Homodimer.

It localises to the cytoplasm. It catalyses the reaction alpha-L-rhamnose = beta-L-rhamnose. The protein operates within carbohydrate metabolism; L-rhamnose metabolism. Functionally, involved in the anomeric conversion of L-rhamnose. This Bacillus subtilis (strain 168) protein is L-rhamnose mutarotase.